The chain runs to 911 residues: MSRFFTTGSDSESESSLSGEELVTKPVSGNYGKQPLLLSEDEEDTKRVVRSAKDKRFEELTNLIRTIRNAMKIRDVTKCLEEFELLGKAYGKAKSIVDKEGVPRFYIRILADLEDYLNELWEDKEGKKKMNKNNAKALSTLRQKIRKYNRDFESHITNYKQNPEQSADEDAEKNEEDSEGSSDEDEDEDGVGNTTFLKKKQESSGESRKFHKKMEDDDEDSEDSEDEEWDTSSTSSDSDSEEEEGKQTVLASKFLKKAPTTEEDKKAAEKKREDKAKKKHDRKSKRLDEEEEDNEGGEWERVRGGVPLVKEKPKMFAKGTEITHAVVIKKLNEILQVRGKKGTDRATQIELLQLLVQIAAENNLGVGVIVKIKFNIIASLYDYNPNLATYMKPEMWQMCLDCINELMDTLVAHSNIFVGENILEESENLHNFDQPLRVRGCILTLVERMDEEFTKIMQNTDPHSQEYVEHLKDEAQVCAIIERVQRYLEEKGTTEEICQIYLRRILHTYYKFDYKAHQRQLTPPEGSSKSEQDQAENEGEDSAVLMERLCKYIYAKDRTDRIRTCAILCHIYHHALHSRWYQARDLMLMSHLQDNIQHADPPVQILYNRTMVQLGICAFRQGLTKDAHNALLDIQSSGRAKELLGQGLLLRSLQERNQEQEKVERRRQVPFHLHINLELLECVYLVSAMLLEIPYMAAHESDARRRMISKQFHHQLRVGERQPLLGPPESMREHVVAASKAMKMGDWKTCHSFIINEKMNGKVWDLFPEADKVRTMLVRKIQEESLRTYLFTYSSVYDSISMETLSDMFELDLPTVHSIISKMIINEELMASLDQPTQTVVMHRTEPTAQQNLALQLAEKLGSLVENNERVFDHKQGTYGGYFRDQKDGYRKNEGYMRRGGYRQQQSQTAY.

Residues 1–44 form a disordered region; sequence MSRFFTTGSDSESESSLSGEELVTKPVSGNYGKQPLLLSEDEED. The segment covering 8–21 has biased composition (low complexity); the sequence is GSDSESESSLSGEE. 7 positions are modified to phosphoserine: serine 9, serine 11, serine 13, serine 15, serine 16, serine 18, and serine 39. Lysine 99 is modified (N6-acetyllysine). Disordered stretches follow at residues 157–299 and 520–540; these read TNYK…GGEW and QLTP…NEGE. Phosphoserine occurs at positions 166, 178, 181, and 182. Over residues 166 to 190 the composition is skewed to acidic residues; the sequence is SADEDAEKNEEDSEGSSDEDEDEDG. Basic and acidic residues predominate over residues 199 to 208; the sequence is KKQESSGESR. Residues 216 to 230 show a composition bias toward acidic residues; that stretch reads DDDEDSEDSEDEEWD. A compositionally biased stretch (basic and acidic residues) spans 259–276; the sequence is PTTEEDKKAAEKKREDKA. Polar residues predominate over residues 520-529; it reads QLTPPEGSSK. Threonine 522 carries the post-translational modification Phosphothreonine. N6-acetyllysine is present on lysine 641. The 177-residue stretch at 671–847 folds into the PCI domain; it reads FHLHINLELL…QTVVMHRTEP (177 aa). The interval 883–911 is disordered; sequence FRDQKDGYRKNEGYMRRGGYRQQQSQTAY. The segment covering 884–897 has biased composition (basic and acidic residues); it reads RDQKDGYRKNEGYM. Serine 907 is modified (phosphoserine).

This sequence belongs to the eIF-3 subunit C family. Component of the eukaryotic translation initiation factor 3 (eIF-3) complex, which is composed of 13 subunits: EIF3A, EIF3B, EIF3C, EIF3D, EIF3E, EIF3F, EIF3G, EIF3H, EIF3I, EIF3J, EIF3K, EIF3L and EIF3M. The eIF-3 complex appears to include 3 stable modules: module A is composed of EIF3A, EIF3B, EIF3G and EIF3I; module B is composed of EIF3F, EIF3H, and EIF3M; and module C is composed of EIF3C, EIF3D, EIF3E, EIF3K and EIF3L. EIF3C of module C binds EIF3B of module A and EIF3H of module B, thereby linking the three modules. EIF3J is a labile subunit that binds to the eIF-3 complex via EIF3B. The eIF-3 complex may interact with RPS6KB1 under conditions of nutrient depletion. Mitogenic stimulation may lead to binding and activation of a complex composed of MTOR and RPTOR, leading to phosphorylation and release of RPS6KB1 and binding of EIF4B to eIF-3. Interacts with ALKBH4, IFIT1 and IFIT2. Interacts with BZW2/5MP1. Phosphorylated. Phosphorylation is enhanced upon serum stimulation.

The protein localises to the cytoplasm. In terms of biological role, component of the eukaryotic translation initiation factor 3 (eIF-3) complex, which is required for several steps in the initiation of protein synthesis. The eIF-3 complex associates with the 40S ribosome and facilitates the recruitment of eIF-1, eIF-1A, eIF-2:GTP:methionyl-tRNAi and eIF-5 to form the 43S pre-initiation complex (43S PIC). The eIF-3 complex stimulates mRNA recruitment to the 43S PIC and scanning of the mRNA for AUG recognition. The eIF-3 complex is also required for disassembly and recycling of post-termination ribosomal complexes and subsequently prevents premature joining of the 40S and 60S ribosomal subunits prior to initiation. The eIF-3 complex specifically targets and initiates translation of a subset of mRNAs involved in cell proliferation, including cell cycling, differentiation and apoptosis, and uses different modes of RNA stem-loop binding to exert either translational activation or repression. The protein is Eukaryotic translation initiation factor 3 subunit C (Eif3c) of Mus musculus (Mouse).